A 255-amino-acid polypeptide reads, in one-letter code: Small ribosomal subunit protein uS2 (255 aa).

Belongs to the universal ribosomal protein uS2 family.

This is Small ribosomal subunit protein uS2 from Streptococcus pyogenes serotype M3 (strain ATCC BAA-595 / MGAS315).